We begin with the raw amino-acid sequence, 534 residues long: Phosphoenolpyruvate carboxykinase (ATP) (534 aa).

R60, Y195, and K201 together coordinate substrate. Residues K201, H221, and 237 to 245 (GLSGTGKTT) each bind ATP. K201 and H221 together coordinate Mn(2+). D258 is a binding site for Mn(2+). ATP is bound by residues E287, R324, and T449. R324 provides a ligand contact to substrate.

It belongs to the phosphoenolpyruvate carboxykinase (ATP) family. Requires Mn(2+) as cofactor.

Its subcellular location is the cytoplasm. The enzyme catalyses oxaloacetate + ATP = phosphoenolpyruvate + ADP + CO2. The protein operates within carbohydrate biosynthesis; gluconeogenesis. Involved in the gluconeogenesis. Catalyzes the conversion of oxaloacetate (OAA) to phosphoenolpyruvate (PEP) through direct phosphoryl transfer between the nucleoside triphosphate and OAA. This chain is Phosphoenolpyruvate carboxykinase (ATP), found in Flavobacterium johnsoniae (strain ATCC 17061 / DSM 2064 / JCM 8514 / BCRC 14874 / CCUG 350202 / NBRC 14942 / NCIMB 11054 / UW101) (Cytophaga johnsonae).